A 157-amino-acid polypeptide reads, in one-letter code: Small ribosomal subunit protein uS7 (157 aa).

It belongs to the universal ribosomal protein uS7 family. As to quaternary structure, part of the 30S ribosomal subunit. Contacts proteins S9 and S11.

Functionally, one of the primary rRNA binding proteins, it binds directly to 16S rRNA where it nucleates assembly of the head domain of the 30S subunit. Is located at the subunit interface close to the decoding center, probably blocks exit of the E-site tRNA. In Hydrogenovibrio crunogenus (strain DSM 25203 / XCL-2) (Thiomicrospira crunogena), this protein is Small ribosomal subunit protein uS7.